A 298-amino-acid polypeptide reads, in one-letter code: Foldase protein PrsA 1 (298 aa).

Residues 1-23 (MNKTWKKAATVLAFAGIALSATA) form the signal peptide. Cys24 carries the N-palmitoyl cysteine lipid modification. Cys24 carries S-diacylglycerol cysteine lipidation. In terms of domain architecture, PpiC spans 141-234 (QPEVTVQHIL…YGYHVIKMIK (94 aa)).

It belongs to the PrsA family.

Its subcellular location is the cell membrane. The catalysed reaction is [protein]-peptidylproline (omega=180) = [protein]-peptidylproline (omega=0). In terms of biological role, plays a major role in protein secretion by helping the post-translocational extracellular folding of several secreted proteins. In Lactobacillus johnsonii (strain CNCM I-12250 / La1 / NCC 533), this protein is Foldase protein PrsA 1 (prsA1).